Consider the following 64-residue polypeptide: Large ribosomal subunit protein bL33 (64 aa).

The protein belongs to the bacterial ribosomal protein bL33 family.

The sequence is that of Large ribosomal subunit protein bL33 from Gloeothece citriformis (strain PCC 7424) (Cyanothece sp. (strain PCC 7424)).